Here is a 450-residue protein sequence, read N- to C-terminus: Carbamoyl phosphate synthase arginine-specific small chain (450 aa).

A mitochondrion-targeting transit peptide spans 1–29 (MFAARLFKAMPARASAFPSVNASIQSRFM). The Glutamine amidotransferase type-1 domain occupies 220-407 (HVAVIDCGVK…LDSVRKYKAS (188 aa)). Residue cysteine 296 is the Nucleophile of the active site. Catalysis depends on residues histidine 380 and glutamate 382.

The protein belongs to the CarA family. Heterodimer composed of 2 chains; the small (or glutamine) chain promotes the hydrolysis of glutamine to ammonia, which is used by the large (or ammonia) chain to synthesize carbamoyl phosphate.

The protein localises to the mitochondrion matrix. The catalysed reaction is hydrogencarbonate + L-glutamine + 2 ATP + H2O = carbamoyl phosphate + L-glutamate + 2 ADP + phosphate + 2 H(+). It carries out the reaction L-glutamine + H2O = L-glutamate + NH4(+). The protein operates within amino-acid biosynthesis; L-arginine biosynthesis; carbamoyl phosphate from bicarbonate: step 1/1. In terms of biological role, small subunit of the arginine-specific carbamoyl phosphate synthase (CPSase). CPSase catalyzes the formation of carbamoyl phosphate from the ammonia moiety of glutamine, carbonate, and phosphate donated by ATP, the first step of the arginine biosynthetic pathway. The small subunit (glutamine amidotransferase) binds and cleaves glutamine to supply the large subunit with the substrate ammonia. This chain is Carbamoyl phosphate synthase arginine-specific small chain (cpa1), found in Aspergillus oryzae (strain ATCC 42149 / RIB 40) (Yellow koji mold).